The following is a 438-amino-acid chain: GDP-mannose 6-dehydrogenase (438 aa).

Residues Y10, V11, D30, K35, T86, and T124 each contribute to the NAD(+) site. 10 residues coordinate GDP-alpha-D-mannuronate: E161, K210, N214, H217, N225, Y256, Y257, R259, F262, and G265. The active site involves C268. Residue K271 participates in NAD(+) binding. K324 is a binding site for GDP-alpha-D-mannuronate. NAD(+) is bound at residue R331.

Belongs to the UDP-glucose/GDP-mannose dehydrogenase family.

It carries out the reaction GDP-alpha-D-mannose + 2 NAD(+) + H2O = GDP-alpha-D-mannuronate + 2 NADH + 3 H(+). It functions in the pathway glycan biosynthesis; alginate biosynthesis. Catalyzes the oxidation of guanosine diphospho-D-mannose (GDP-D-mannose) to GDP-D-mannuronic acid, a precursor for alginate polymerization. The alginate layer causes a mucoid phenotype and provides a protective barrier against host immune defenses and antibiotics. The sequence is that of GDP-mannose 6-dehydrogenase (algD) from Pseudomonas syringae pv. syringae.